An 842-amino-acid polypeptide reads, in one-letter code: 9-beta-pimara-7,15-diene synthase, chloroplastic (842 aa).

Residues 1-56 (MASPMEAVARSSLVLAPRRRRALGLLPAAAAAAPFVLDCRRRHNGGMRRPHVSFAC) constitute a chloroplast transit peptide. 5 residues coordinate Mg(2+): aspartate 591, aspartate 595, asparagine 735, serine 739, and glutamate 743. Positions 591-595 (DDFFD) match the DDXXD motif motif.

This sequence belongs to the terpene synthase family. Requires Mg(2+) as cofactor. In terms of tissue distribution, expressed in roots.

It is found in the plastid. Its subcellular location is the chloroplast. The catalysed reaction is 9alpha-copalyl diphosphate = 9beta-pimara-7,15-diene + diphosphate. In terms of biological role, involved in the biosynthesis of momilactone A and B phytoalexins. Catalyzes the conversion of syn-copalyl diphosphate to the phytoalexin precursor syn-pimara-7,15-diene. The sequence is that of 9-beta-pimara-7,15-diene synthase, chloroplastic from Oryza sativa subsp. japonica (Rice).